Here is a 115-residue protein sequence, read N- to C-terminus: Variant surface glycoprotein ANTAT 1.8 (115 aa).

Residue Asn42 is glycosylated (N-linked (GlcNAc...) asparagine). The GPI-anchor amidated aspartate moiety is linked to residue Asp92. Residues 93 to 115 (SSILVNKQLALSVVSAAFAALLF) constitute a propeptide, removed in mature form.

The protein localises to the cell membrane. In terms of biological role, VSG forms a coat on the surface of the parasite. The trypanosome evades the immune response of the host by expressing a series of antigenically distinct VSGs from an estimated 1000 VSG genes. This Trypanosoma brucei brucei protein is Variant surface glycoprotein ANTAT 1.8.